The primary structure comprises 163 residues: MIKEIIAKHFNLADKNIQLLPKFNIILNKREIIVKEDKCISCGKCIEICPVNAITYSSDGLYITINKEKCVFCGKCKKVCPTNAIVIIRLRCEINEDARIIEVDKYEFIDYISERCASCLVCLRNCPFNAIEEYGSKIRIDINKCELCGKCEEICPLNAIILR.

4Fe-4S ferredoxin-type domains are found at residues 30-59, 61-90, 105-136, and 136-163; these read REIIVKEDKCISCGKCIEICPVNAITYSSD, LYITINKEKCVFCGKCKKVCPTNAIVIIRL, KYEFIDYISERCASCLVCLRNCPFNAIEEYGS, and SKIRIDINKCELCGKCEEICPLNAIILR. Residues C39, C42, C45, C49, C70, C73, C76, C80, C116, C119, C122, C126, C145, C148, C151, and C155 each coordinate [4Fe-4S] cluster.

This is an uncharacterized protein from Methanocaldococcus jannaschii (strain ATCC 43067 / DSM 2661 / JAL-1 / JCM 10045 / NBRC 100440) (Methanococcus jannaschii).